A 565-amino-acid chain; its full sequence is Ubiquitin carboxyl-terminal hydrolase 21 (565 aa).

2 stretches are compositionally biased toward basic and acidic residues: residues 1-14 (MPQA…RTRE) and 58-70 (PPDE…DLGR). Residues 1-128 (MPQASEHRLG…LRPMGIALGG (128 aa)) are disordered. Low complexity predominate over residues 71–81 (GRTSGSRPRGP). Residues 104–116 (SRTNLTRSKSVSS) are compositionally biased toward polar residues. A Nuclear export signal motif is present at residues 134–152 (ELGAALSRLALRPEPPTLR). In terms of domain architecture, USP spans 212–558 (VGLRNLGNTC…EGYVLFYQLM (347 aa)). Cysteine 221 functions as the Nucleophile in the catalytic mechanism. The disordered stretch occupies residues 324–347 (APPILASGPVPSPPRRGGALHEEP). 4 residues coordinate Zn(2+): cysteine 384, cysteine 387, cysteine 437, and cysteine 440. The active-site Proton acceptor is histidine 518.

This sequence belongs to the peptidase C19 family. USP21 subfamily. In terms of assembly, interacts with BEND3.

It is found in the cytoplasm. Its subcellular location is the nucleus. The catalysed reaction is Thiol-dependent hydrolysis of ester, thioester, amide, peptide and isopeptide bonds formed by the C-terminal Gly of ubiquitin (a 76-residue protein attached to proteins as an intracellular targeting signal).. In terms of biological role, deubiquitinates histone H2A, a specific tag for epigenetic transcriptional repression, thereby acting as a coactivator. Deubiquitination of histone H2A releaves the repression of di- and trimethylation of histone H3 at 'Lys-4', resulting in regulation of transcriptional initiation. Regulates gene expression via histone H2A deubiquitination. Deubiquitinates BAZ2A/TIP5 leading to its stabilization. Also capable of removing NEDD8 from NEDD8 conjugates but has no effect on Sentrin-1 conjugates. Also acts as a negative regulator of the ribosome quality control (RQC) by mediating deubiquitination of 40S ribosomal proteins RPS10/eS10 and RPS20/uS10, thereby antagonizing ZNF598-mediated 40S ubiquitination. This chain is Ubiquitin carboxyl-terminal hydrolase 21 (Usp21), found in Rattus norvegicus (Rat).